A 474-amino-acid polypeptide reads, in one-letter code: Aspartyl protease family protein At5g10770 (474 aa).

A signal peptide spans 1–25; sequence MSINRNLLNIIIILCICLNLGCNDG. Positions 132 to 469 constitute a Peptidase A1 domain; the sequence is YIVTVGLGTP…DGAGGRVGFA (338 aa). Residues D150 and D352 contribute to the active site. The cysteines at positions 391 and 432 are disulfide-linked. N443 carries GPI-anchor amidated asparagine lipidation. Residues 444–474 constitute a propeptide, removed in mature form; the sequence is AAIFGNVQQQTLEVVYDGAGGRVGFAPNGCS.

This sequence belongs to the peptidase A1 family.

The protein localises to the cell membrane. Functionally, probably not redundant with AED1 and not involved in restriction of salicylic acid (SA) or systemic acquired resistance (SAR) signaling. In Arabidopsis thaliana (Mouse-ear cress), this protein is Aspartyl protease family protein At5g10770.